The following is a 483-amino-acid chain: Argininosuccinate lyase (483 aa).

The protein belongs to the lyase 1 family. Argininosuccinate lyase subfamily.

The protein resides in the cytoplasm. The enzyme catalyses 2-(N(omega)-L-arginino)succinate = fumarate + L-arginine. It functions in the pathway amino-acid biosynthesis; L-arginine biosynthesis; L-arginine from L-ornithine and carbamoyl phosphate: step 3/3. This chain is Argininosuccinate lyase, found in Archaeoglobus fulgidus (strain ATCC 49558 / DSM 4304 / JCM 9628 / NBRC 100126 / VC-16).